We begin with the raw amino-acid sequence, 377 residues long: Carboxynorspermidine/carboxyspermidine decarboxylase (377 aa).

At lysine 41 the chain carries N6-(pyridoxal phosphate)lysine. Positions 238 and 274 each coordinate substrate.

The protein belongs to the Orn/Lys/Arg decarboxylase class-II family. NspC subfamily. In terms of assembly, homodimer. It depends on pyridoxal 5'-phosphate as a cofactor.

It localises to the cytoplasm. The enzyme catalyses carboxynorspermidine + H(+) = norspermidine + CO2. It catalyses the reaction carboxyspermidine + H(+) = spermidine + CO2. Dithiothreitol greatly stimulates activity, maximum stimulation being at 5-20 mM dithiothreitol concentration. Fe(3+), Fe(2+) and Mn(2+) severely inhibit activity (88%, 82% and 50%, respectively), whereas Zn(2+) has a slightly inhibitory effect (23%) and Mg(2+), Ca(2+), Cu(2+) and Cu(+) have no effect. Its function is as follows. Catalyzes the decarboxylation of carboxynorspermidine and carboxyspermidine. 2,3-diaminopropionic acid, 2,4-diaminobutyric acid, L-ornithine or L-lysine cannot serve as substrates. The polypeptide is Carboxynorspermidine/carboxyspermidine decarboxylase (Vibrio alginolyticus).